We begin with the raw amino-acid sequence, 263 residues long: uncharacterized protein (263 aa).

The region spanning 107–246 (ILGVLNGDGS…CCSFLEKLGI (140 aa)) is the DOD-type homing endonuclease domain.

This is an uncharacterized protein from Methanocaldococcus jannaschii (strain ATCC 43067 / DSM 2661 / JAL-1 / JCM 10045 / NBRC 100440) (Methanococcus jannaschii).